The primary structure comprises 91 residues: MANKQDLIAKVAEATELTKKDSAAAVDAVFSTIEAFLAEGEKVQLIGFGNFEVRERAARKGRNPQTGAEIEIAASKVPAFKAGKALKDAVK.

It belongs to the bacterial histone-like protein family.

In terms of biological role, histone-like DNA-binding protein which is capable of wrapping DNA to stabilize it, and thus to prevent its denaturation under extreme environmental conditions. Also seems to act as a fortuitous virulence factor in delayed sequelae by binding to heparan sulfate-proteoglycans in the extracellular matrix of target organs and acting as a nidus for in situ immune complex formation. The sequence is that of DNA-binding protein HU (hup) from Streptococcus pyogenes serotype M1.